A 300-amino-acid polypeptide reads, in one-letter code: Fatty acid elongase 3 (300 aa).

Helical transmembrane passes span valine 31–methionine 51, phenylalanine 61–cysteine 81, and isoleucine 127–glutamate 147. A HxxHH motif motif is present at residues histidine 165 to histidine 169. Catalysis depends on histidine 168, which acts as the Nucleophile. Transmembrane regions (helical) follow at residues alanine 170–phenylalanine 190, threonine 192–methionine 212, isoleucine 219–leucine 239, and methionine 261–serine 283.

This sequence belongs to the ELO family.

It localises to the endoplasmic reticulum membrane. It catalyses the reaction an acyl-CoA + malonyl-CoA + H(+) = a 3-oxoacyl-CoA + CO2 + CoA. The protein operates within lipid metabolism; fatty acid biosynthesis. Its function is as follows. Involved in the synthesis of fatty acids. Elongates C14 fatty acids to C18. Required for the maintenance of the global lipidome profile in this parasite. The chain is Fatty acid elongase 3 from Trypanosoma cruzi (strain CL Brener).